Consider the following 339-residue polypeptide: tRNA methyltransferase 10 homolog A (339 aa).

Disordered regions lie at residues 1–90 (MSSE…HDRK) and 282–339 (DKAC…SLPH). Basic and acidic residues predominate over residues 14-35 (NVDKKQGINEDQEESQKPRLGE). A coiled-coil region spans residues 52–81 (KQWEEQRELRKQKRKEKRKRKKLERQCQME). A compositionally biased stretch (basic residues) spans 61-74 (RKQKRKEKRKRKKL). Residues 89-279 (RKRVRRDVVH…TILPQRKGAV (191 aa)) enclose the SAM-dependent MTase TRM10-type domain. Residues 300–309 (GGSDSDSSEE) are compositionally biased toward acidic residues. Basic and acidic residues predominate over residues 310 to 330 (EYSRNELDSPHEEKQDKENHT). Phosphoserine is present on Ser336.

This sequence belongs to the class IV-like SAM-binding methyltransferase superfamily. TRM10 family. In terms of assembly, interacts with tRNA. Expressed in embryonic and fetal brain. It is expressed throughout the dorsal telencephalon at 8 and 11 weeks of gestation, with highest expression in ventricular zone and marginal zone. Detected in cerebellar cortex and nuclei, but not in dorsal telencephalon, at later stages.

The protein localises to the nucleus. Its subcellular location is the nucleolus. It catalyses the reaction guanosine(9) in tRNA + S-adenosyl-L-methionine = N(1)-methylguanosine(9) in tRNA + S-adenosyl-L-homocysteine + H(+). In terms of biological role, S-adenosyl-L-methionine-dependent guanine N(1)-methyltransferase that catalyzes the formation of N(1)-methylguanine at position 9 (m1G9) in tRNAs. Probably not able to catalyze formation of N(1)-methyladenine at position 9 (m1A9) in tRNAs. This is tRNA methyltransferase 10 homolog A (TRMT10A) from Homo sapiens (Human).